We begin with the raw amino-acid sequence, 185 residues long: Elongation factor P (185 aa).

It belongs to the elongation factor P family.

It is found in the cytoplasm. It functions in the pathway protein biosynthesis; polypeptide chain elongation. Its function is as follows. Involved in peptide bond synthesis. Stimulates efficient translation and peptide-bond synthesis on native or reconstituted 70S ribosomes in vitro. Probably functions indirectly by altering the affinity of the ribosome for aminoacyl-tRNA, thus increasing their reactivity as acceptors for peptidyl transferase. The sequence is that of Elongation factor P from Caldicellulosiruptor saccharolyticus (strain ATCC 43494 / DSM 8903 / Tp8T 6331).